Reading from the N-terminus, the 488-residue chain is Probable glycine dehydrogenase (decarboxylating) subunit 2 (488 aa).

Lys-274 is modified (N6-(pyridoxal phosphate)lysine).

Belongs to the GcvP family. C-terminal subunit subfamily. The glycine cleavage system is composed of four proteins: P, T, L and H. In this organism, the P 'protein' is a heterodimer of two subunits. Requires pyridoxal 5'-phosphate as cofactor.

It carries out the reaction N(6)-[(R)-lipoyl]-L-lysyl-[glycine-cleavage complex H protein] + glycine + H(+) = N(6)-[(R)-S(8)-aminomethyldihydrolipoyl]-L-lysyl-[glycine-cleavage complex H protein] + CO2. In terms of biological role, the glycine cleavage system catalyzes the degradation of glycine. The P protein binds the alpha-amino group of glycine through its pyridoxal phosphate cofactor; CO(2) is released and the remaining methylamine moiety is then transferred to the lipoamide cofactor of the H protein. The chain is Probable glycine dehydrogenase (decarboxylating) subunit 2 from Listeria monocytogenes serovar 1/2a (strain ATCC BAA-679 / EGD-e).